The sequence spans 451 residues: Aminodeoxychorismate synthase component 1 (451 aa).

L-tryptophan is bound by residues serine 34, 41–44, and 238–240; these read HNRF and PFS. Catalysis depends on glutamate 256, which acts as the Proton donor. The active-site N6-(4-deoxychorismate)-lysine intermediate is the lysine 272.

It belongs to the anthranilate synthase component I family. Monomer. Heterodimer consisting of two non-identical subunits: a glutamine amidotransferase subunit (PabA) and a aminodeoxychorismate synthase subunit (PabB). Mg(2+) is required as a cofactor.

It catalyses the reaction chorismate + L-glutamine = 4-amino-4-deoxychorismate + L-glutamate. It participates in cofactor biosynthesis; tetrahydrofolate biosynthesis; 4-aminobenzoate from chorismate: step 1/2. Part of a heterodimeric complex that catalyzes the two-step biosynthesis of 4-amino-4-deoxychorismate (ADC), a precursor of p-aminobenzoate (PABA) and tetrahydrofolate. In the first step, a glutamine amidotransferase (PabA) generates ammonia as a substrate that, along with chorismate, is used in the second step, catalyzed by aminodeoxychorismate synthase (PabB) to produce ADC. This is Aminodeoxychorismate synthase component 1 (pabB) from Klebsiella aerogenes (Enterobacter aerogenes).